A 70-amino-acid polypeptide reads, in one-letter code: Exodeoxyribonuclease 7 small subunit (70 aa).

It belongs to the XseB family. As to quaternary structure, heterooligomer composed of large and small subunits.

The protein resides in the cytoplasm. It catalyses the reaction Exonucleolytic cleavage in either 5'- to 3'- or 3'- to 5'-direction to yield nucleoside 5'-phosphates.. Functionally, bidirectionally degrades single-stranded DNA into large acid-insoluble oligonucleotides, which are then degraded further into small acid-soluble oligonucleotides. This Magnetococcus marinus (strain ATCC BAA-1437 / JCM 17883 / MC-1) protein is Exodeoxyribonuclease 7 small subunit.